The primary structure comprises 692 residues: Elongation factor G (692 aa).

The 275-residue stretch at 8-282 folds into the tr-type G domain; that stretch reads KDYRNIGIMA…AVVDYLPSPL (275 aa). GTP contacts are provided by residues 17 to 24, 81 to 85, and 135 to 138; these read AHIDAGKT, DTPGH, and NKMD.

Belongs to the TRAFAC class translation factor GTPase superfamily. Classic translation factor GTPase family. EF-G/EF-2 subfamily.

The protein resides in the cytoplasm. In terms of biological role, catalyzes the GTP-dependent ribosomal translocation step during translation elongation. During this step, the ribosome changes from the pre-translocational (PRE) to the post-translocational (POST) state as the newly formed A-site-bound peptidyl-tRNA and P-site-bound deacylated tRNA move to the P and E sites, respectively. Catalyzes the coordinated movement of the two tRNA molecules, the mRNA and conformational changes in the ribosome. This chain is Elongation factor G (fusA), found in Mycoplasmopsis pulmonis (strain UAB CTIP) (Mycoplasma pulmonis).